A 338-amino-acid chain; its full sequence is Probable protein S-acyltransferase 1 (338 aa).

Transmembrane regions (helical) follow at residues 32 to 52 (DASSLLLTTCMIGGPAIAFSI) and 68 to 88 (LTLIGAILLTFMAFTFLFLTS). One can recognise a DHHC domain in the interval 142–192 (KFCDTCQLYRPPRAFHCSICNNCVQRFDHHCPWVGQCIALRNYPFFVCFLS). Cys-172 acts as the S-palmitoyl cysteine intermediate in catalysis. 2 consecutive transmembrane segments (helical) span residues 186 to 206 (FFVCFLSCSTLLCIYVFVFSW) and 225 to 245 (ILGVLGLYCFVSVWFVGGLTV). The tract at residues 319-338 (FGPKDTKMSSGKSDSEARER) is disordered. The span at 320–338 (GPKDTKMSSGKSDSEARER) shows a compositional bias: basic and acidic residues.

This sequence belongs to the DHHC palmitoyltransferase family.

It localises to the endosome membrane. It catalyses the reaction L-cysteinyl-[protein] + hexadecanoyl-CoA = S-hexadecanoyl-L-cysteinyl-[protein] + CoA. In terms of biological role, palmitoyl acyltransferase. The sequence is that of Probable protein S-acyltransferase 1 (PAT01) from Arabidopsis thaliana (Mouse-ear cress).